A 175-amino-acid polypeptide reads, in one-letter code: Co-chaperone protein HscB homolog (175 aa).

Residues 7 to 79 (SHFDLFHLPA…LKRATYLLHL (73 aa)) form the J domain.

This sequence belongs to the HscB family. Interacts with HscA and stimulates its ATPase activity.

Its function is as follows. Co-chaperone involved in the maturation of iron-sulfur cluster-containing proteins. Seems to help targeting proteins to be folded toward HscA. The protein is Co-chaperone protein HscB homolog of Burkholderia mallei (strain ATCC 23344).